An 83-amino-acid chain; its full sequence is Apolipoprotein C-I, basic form (83 aa).

The first 26 residues, 1–26, serve as a signal peptide directing secretion; that stretch reads MRLFLSLPVLVVVLSIVLEGPAPAQG.

Belongs to the apolipoprotein C1 family.

Its subcellular location is the secreted. In terms of biological role, inhibitor of lipoprotein binding to the low density lipoprotein (LDL) receptor, LDL receptor-related protein, and very low density lipoprotein (VLDL) receptor. Associates with high density lipoproteins (HDL) and the triacylglycerol-rich lipoproteins in the plasma and makes up about 10% of the protein of the VLDL and 2% of that of HDL. Appears to interfere directly with fatty acid uptake and is also the major plasma inhibitor of cholesteryl ester transfer protein (CETP). Binds free fatty acids and reduces their intracellular esterification. Modulates the interaction of APOE with beta-migrating VLDL and inhibits binding of beta-VLDL to the LDL receptor-related protein. The sequence is that of Apolipoprotein C-I, basic form (APOC1B) from Pan troglodytes (Chimpanzee).